The primary structure comprises 648 residues: Macrolide export ATP-binding/permease protein MacB (648 aa).

Positions 6-251 constitute an ABC transporter domain; it reads IRVRGVSRAF…GPSAGWRGAI (246 aa). 42-49 contributes to the ATP binding site; the sequence is GASGSGKS. Helical transmembrane passes span 273 to 293, 528 to 548, 572 to 592, and 613 to 633; these read LLTM…SALG, VAVI…LVSV, FLIE…MLAL, and SIIV…FLPA.

This sequence belongs to the ABC transporter superfamily. Macrolide exporter (TC 3.A.1.122) family. Homodimer.

Its subcellular location is the cell inner membrane. Its function is as follows. Non-canonical ABC transporter that contains transmembrane domains (TMD), which form a pore in the inner membrane, and an ATP-binding domain (NBD), which is responsible for energy generation. Confers resistance against macrolides. The polypeptide is Macrolide export ATP-binding/permease protein MacB (Agrobacterium fabrum (strain C58 / ATCC 33970) (Agrobacterium tumefaciens (strain C58))).